The chain runs to 144 residues: Large ribosomal subunit protein uL16 (144 aa).

Basic residues predominate over residues methionine 1 to arginine 14. Positions methionine 1–asparagine 22 are disordered.

It belongs to the universal ribosomal protein uL16 family. As to quaternary structure, part of the 50S ribosomal subunit.

Its function is as follows. Binds 23S rRNA and is also seen to make contacts with the A and possibly P site tRNAs. In Syntrophomonas wolfei subsp. wolfei (strain DSM 2245B / Goettingen), this protein is Large ribosomal subunit protein uL16.